A 400-amino-acid polypeptide reads, in one-letter code: Acetate kinase (400 aa).

N10 is a binding site for Mg(2+). An ATP-binding site is contributed by K17. Residue R91 coordinates substrate. The Proton donor/acceptor role is filled by D150. ATP-binding positions include 210-214 (HLGNG), 285-287 (DCR), and 333-337 (GIGEN). E387 is a binding site for Mg(2+).

Belongs to the acetokinase family. Homodimer. It depends on Mg(2+) as a cofactor. The cofactor is Mn(2+).

It is found in the cytoplasm. The enzyme catalyses acetate + ATP = acetyl phosphate + ADP. Its pathway is metabolic intermediate biosynthesis; acetyl-CoA biosynthesis; acetyl-CoA from acetate: step 1/2. Its function is as follows. Catalyzes the formation of acetyl phosphate from acetate and ATP. Can also catalyze the reverse reaction. This Proteus mirabilis (strain HI4320) protein is Acetate kinase.